The sequence spans 158 residues: Putative pre-16S rRNA nuclease (158 aa).

This sequence belongs to the YqgF nuclease family.

The protein resides in the cytoplasm. Its function is as follows. Could be a nuclease involved in processing of the 5'-end of pre-16S rRNA. The protein is Putative pre-16S rRNA nuclease of Paracoccus denitrificans (strain Pd 1222).